The primary structure comprises 587 residues: Nucleoporin ndc-1 (587 aa).

Topologically, residues 1 to 79 are cytoplasmic; sequence MMGENSSAYT…FHSEIDVRKK (79 aa). The disordered stretch occupies residues 32–55; that stretch reads ASTSATSSPNLRKSPNRGFSSPRA. The helical transmembrane segment at 80–100 threads the bilayer; sequence LASFVCGAAVALSFIVTVSIL. Residues 101 to 121 are Perinuclear space-facing; the sequence is KLSIWAPFSSVQDSLTWWLYP. The chain crosses the membrane as a helical span at residues 122–142; sequence TSWPVTLFIWLSSVAWTFLII. At 143–161 the chain is on the cytoplasmic side; the sequence is HQFCTVTQVPRIPITDTYA. A helical transmembrane segment spans residues 162 to 182; the sequence is WAGAALEFVHRLIFVYTAFTV. At 183-187 the chain is on the perinuclear space side; it reads SESSF. The chain crosses the membrane as a helical span at residues 188 to 208; that stretch reads FEDFAWIAIAFSVAISSALVI. Over 209 to 255 the chain is Cytoplasmic; sequence FRSDFHLNFSNVQVNSFKTLIDFAKSLPYGSLAETSGVDAAIAYTAA. Residues 256–276 traverse the membrane as a helical segment; sequence MALTVFGSPLLWGFSAWWLLI. Residues 277–281 lie on the Perinuclear space side of the membrane; sequence NIQFH. The helical transmembrane segment at 282-302 threads the bilayer; the sequence is LVLFGVCFAQQFFAKIFMKIV. Topologically, residues 303–587 are cytoplasmic; it reads NQIVMKPMKF…TIKLVCAEEI (285 aa).

This sequence belongs to the NDC1 family.

It localises to the nucleus. Its subcellular location is the nuclear pore complex. The protein resides in the nucleus membrane. Its function is as follows. Component of the nuclear pore complex (NPC), which plays a key role in de novo assembly and insertion of NPC in the nuclear envelope. The polypeptide is Nucleoporin ndc-1 (npp-22) (Caenorhabditis briggsae).